A 191-amino-acid polypeptide reads, in one-letter code: Orotate phosphoribosyltransferase (191 aa).

114–122 (EDVITTGGS) is a 5-phospho-alpha-D-ribose 1-diphosphate binding site. The orotate site is built by Thr118 and Arg146.

This sequence belongs to the purine/pyrimidine phosphoribosyltransferase family. PyrE subfamily. Homodimer. Mg(2+) is required as a cofactor.

It carries out the reaction orotidine 5'-phosphate + diphosphate = orotate + 5-phospho-alpha-D-ribose 1-diphosphate. It functions in the pathway pyrimidine metabolism; UMP biosynthesis via de novo pathway; UMP from orotate: step 1/2. Functionally, catalyzes the transfer of a ribosyl phosphate group from 5-phosphoribose 1-diphosphate to orotate, leading to the formation of orotidine monophosphate (OMP). The sequence is that of Orotate phosphoribosyltransferase from Caldicellulosiruptor saccharolyticus (strain ATCC 43494 / DSM 8903 / Tp8T 6331).